Reading from the N-terminus, the 445-residue chain is KICSTOR subunit 2 (445 aa).

This sequence belongs to the KICS2 family. Part of the KICSTOR complex composed of KPTN, ITFG2, KICS2 and SZT2. SZT2 probably serves as a link between the other three proteins in the KICSTOR complex and may mediate the direct interaction with the GATOR complex via GATOR1. The KICSTOR complex interacts directly with the GATOR1 complex and most probably indirectly with the GATOR2 complex in an amino acid-independent manner.

Its subcellular location is the lysosome membrane. Its function is as follows. As part of the KICSTOR complex functions in the amino acid-sensing branch of the TORC1 signaling pathway. Recruits, in an amino acid-independent manner, the GATOR1 complex to the lysosomal membranes and allows its interaction with GATOR2 and the RAG GTPases. Functions upstream of the RAG GTPases and is required to negatively regulate mTORC1 signaling in absence of amino acids. In absence of the KICSTOR complex mTORC1 is constitutively localized to the lysosome and activated. The KICSTOR complex is also probably involved in the regulation of mTORC1 by glucose. The chain is KICSTOR subunit 2 from Homo sapiens (Human).